We begin with the raw amino-acid sequence, 442 residues long: MLAFFVTMIFIFWRPKGLNEAIPATFGALMVLLCGSVSLADLGEIGTKVTGASVTILATMIMAIALESFGFFYWVAAKLLQQSKGSGIKLFWLTNLLCFLMTIFLNNDGSILITTPILLLVLKYLGLKKHQKAPYLLSGVLIATASSAPIGVSNIVNLISLKIIGMDLYLHTAMMFVPSMMGLIFMTCLLFMFFYKRLPKSLPDIPGHFQSLRHRRYHPLHSPSAPLPERNQTKIMLFVLAFVFLVRMSLFAASYTGISVPLVAVIGSFILLSWRWIYFKTSPRDLLYKSPWHIFIFAFTMYVLIYGLHNIGFTELLVSYFEPVVSGSLAHATFASGISTSVFSNLFNNHPALMISTFTLTEMTLNPSTTKIIYLANIIGSDIGSLLLPMGTLATLIWMHILKQHDESISWGEYIKTTIIIIPLTVLFTLTCLYFWISWLFL.

A run of 11 helical transmembrane segments spans residues 22–42 (IPATFGALMVLLCGSVSLADL), 56–76 (ILATMIMAIALESFGFFYWVA), 85–105 (GSGIKLFWLTNLLCFLMTIFL), 107–127 (NDGSILITTPILLLVLKYLGL), 136–156 (LLSGVLIATASSAPIGVSNIV), 174–194 (MMFVPSMMGLIFMTCLLFMFF), 250–270 (LFAASYTGISVPLVAVIGSFI), 294–314 (IFIFAFTMYVLIYGLHNIGFT), 328–347 (SLAHATFASGISTSVFSNLF), 378–398 (IIGSDIGSLLLPMGTLATLIW), and 419–439 (IIIIPLTVLFTLTCLYFWISW).

It belongs to the ArsB family.

It localises to the cell membrane. This is Putative arsenical pump membrane protein (ywrK) from Bacillus subtilis (strain 168).